Here is a 621-residue protein sequence, read N- to C-terminus: MNEEVREILGGLDFESTKDVAVPERLIDQVIGQDHAVEAIKKAAVQKRHVMLIGSPGTGKSMLAKAMAELLPKEELEDILVYPNPQDPNQPKIRLVPAGKGREIVEAYKEEAMKKAQARNFLIFTLVFLVIGYTVLTNPGNLIWGIIAAVLILMMSRYFIPREDRNVPKLLVDNSDKVTAPFEDATGAHAGALFGDVRHDPFQSGGLETPAHERVEAGAIHRAHKGVLYIDEINTLTIESQQKLLTALQDKKFPITGQSERSSGAMVRTEPVPCDFILVAAGNLDALMGMHPALRSRIEGYGYEVYMNDTMPDTPENRQKLVRFVAQEVVKDGKIPHFDKYAVAEIIKEARRRAGRRNHLTLRLRELGGLVRTAGDIAKSEGSDIVRLEHVLKAKKIAKTIEEQLADKYIERRKDYKLFITEGYEVGRVNGLAVIGESAGIVLPIIAEVTPSMSKSEGRVIATGRLQEIAREAVMNVSAIIKKYTGRDISNMDVHIQFVGTYEGVEGDSASISIATAVISAIEGIPVDQSVAMTGSLSVKGEVLPVGGVTQKIEAAIQAGLKKVIIPKDNIDDVLLDAEHEGKIEVIPVSRINEVLEHVLEDGKKKNRLMSKFKELELAAV.

At 1-117 the chain is on the cytoplasmic side; sequence MNEEVREILG…YKEEAMKKAQ (117 aa). 54 to 61 is an ATP binding site; the sequence is GSPGTGKS. The chain crosses the membrane as a helical span at residues 118-136; it reads ARNFLIFTLVFLVIGYTVL. The Extracellular portion of the chain corresponds to 137–141; that stretch reads TNPGN. Residues 142–160 traverse the membrane as a helical segment; that stretch reads LIWGIIAAVLILMMSRYFI. Over 161-621 the chain is Cytoplasmic; that stretch reads PREDRNVPKL…KFKELELAAV (461 aa). The 180-residue stretch at 423–602 folds into the Lon proteolytic domain; sequence GYEVGRVNGL…NEVLEHVLED (180 aa). Catalysis depends on residues Ser-509 and Lys-552.

The protein belongs to the peptidase S16 family. Archaeal LonB subfamily. As to quaternary structure, homohexamer. Organized in a ring with a central cavity.

It localises to the cell membrane. Functionally, ATP-dependent serine protease that mediates the selective degradation of mutant and abnormal proteins as well as certain short-lived regulatory proteins. Degrades polypeptides processively. In Archaeoglobus fulgidus (strain ATCC 49558 / DSM 4304 / JCM 9628 / NBRC 100126 / VC-16), this protein is Archaeal Lon protease.